A 222-amino-acid polypeptide reads, in one-letter code: Mediator of RNA polymerase II transcription subunit 7 (222 aa).

Residues 34–55 (YKEKKAASAKQTAPNNSNGGSE) form a disordered region. Residues 42-53 (AKQTAPNNSNGG) show a composition bias toward polar residues.

Belongs to the Mediator complex subunit 7 family. As to quaternary structure, component of the Mediator complex, which is composed of at least 21 subunits that form three structurally distinct submodules. The Mediator head module contains MED6, MED8, MED11, SRB4/MED17, SRB5/MED18, ROX3/MED19, SRB2/MED20 and SRB6/MED22, the middle module contains MED1, MED4, NUT1/MED5, MED7, CSE2/MED9, NUT2/MED10, SRB7/MED21 and SOH1/MED31, and the tail module contains MED2, PGD1/MED3, RGR1/MED14, GAL11/MED15 and SIN4/MED16. The head and the middle modules interact directly with RNA polymerase II, whereas the elongated tail module interacts with gene-specific regulatory proteins. MED7 interacts directly with MED1, MED4 and SRB7/MED21.

The protein localises to the nucleus. Its function is as follows. Component of the Mediator complex, a coactivator involved in the regulated transcription of nearly all RNA polymerase II-dependent genes. Mediator functions as a bridge to convey information from gene-specific regulatory proteins to the basal RNA polymerase II transcription machinery. The Mediator complex, having a compact conformation in its free form, is recruited to promoters by direct interactions with regulatory proteins and serves for the assembly of a functional preinitiation complex with RNA polymerase II and the general transcription factors. The Mediator complex unfolds to an extended conformation and partially surrounds RNA polymerase II, specifically interacting with the unphosphorylated form of the C-terminal domain (CTD) of RNA polymerase II. The Mediator complex dissociates from the RNA polymerase II holoenzyme and stays at the promoter when transcriptional elongation begins. The protein is Mediator of RNA polymerase II transcription subunit 7 (MED7) of Saccharomyces cerevisiae (strain ATCC 204508 / S288c) (Baker's yeast).